The sequence spans 247 residues: Ribonuclease 3 (247 aa).

Positions 23–149 (HADLLERLGV…LLGAIFRQHG (127 aa)) constitute an RNase III domain. Glutamate 62 contacts Mg(2+). Aspartate 66 is an active-site residue. Residues aspartate 135 and glutamate 138 each coordinate Mg(2+). The active site involves glutamate 138. In terms of domain architecture, DRBM spans 176-244 (DWKTTLQEEL…ARQAFLKLRE (69 aa)).

Belongs to the ribonuclease III family. In terms of assembly, homodimer. It depends on Mg(2+) as a cofactor.

Its subcellular location is the cytoplasm. It catalyses the reaction Endonucleolytic cleavage to 5'-phosphomonoester.. Functionally, digests double-stranded RNA. Involved in the processing of primary rRNA transcript to yield the immediate precursors to the large and small rRNAs (23S and 16S). Processes some mRNAs, and tRNAs when they are encoded in the rRNA operon. Processes pre-crRNA and tracrRNA of type II CRISPR loci if present in the organism. This is Ribonuclease 3 from Corynebacterium efficiens (strain DSM 44549 / YS-314 / AJ 12310 / JCM 11189 / NBRC 100395).